The chain runs to 497 residues: MORN repeat-containing protein 1 (497 aa).

The tract at residues 1–27 is disordered; that stretch reads MAAAGEGTPSSRGPRRDPPRRPPRNGY. MORN repeat units follow at residues 39-61, 62-84, 86-108, 109-131, 132-154, 155-177, and 178-200; these read YEGE…DGSY, YEGA…WSGD, FSGQ…AGGC, YEGE…DGQV, YQGS…NGDK, YDGD…DGST, and YKGQ…SGVT. Disordered stretches follow at residues 393 to 425 and 468 to 497; these read GGRS…ATEE and QPPH…PAPR.

The chain is MORN repeat-containing protein 1 (MORN1) from Homo sapiens (Human).